We begin with the raw amino-acid sequence, 255 residues long: Pyridoxine 5'-phosphate synthase (255 aa).

Asparagine 6 provides a ligand contact to 3-amino-2-oxopropyl phosphate. 8 to 9 (DH) contributes to the 1-deoxy-D-xylulose 5-phosphate binding site. Arginine 17 lines the 3-amino-2-oxopropyl phosphate pocket. The active-site Proton acceptor is histidine 41. 1-deoxy-D-xylulose 5-phosphate is bound by residues arginine 43 and histidine 48. Glutamate 68 acts as the Proton acceptor in catalysis. Residue threonine 96 participates in 1-deoxy-D-xylulose 5-phosphate binding. The active-site Proton donor is the histidine 208. Residues glycine 209 and 230-231 (GQ) each bind 3-amino-2-oxopropyl phosphate.

Belongs to the PNP synthase family. Homooctamer; tetramer of dimers.

Its subcellular location is the cytoplasm. The enzyme catalyses 3-amino-2-oxopropyl phosphate + 1-deoxy-D-xylulose 5-phosphate = pyridoxine 5'-phosphate + phosphate + 2 H2O + H(+). Its pathway is cofactor biosynthesis; pyridoxine 5'-phosphate biosynthesis; pyridoxine 5'-phosphate from D-erythrose 4-phosphate: step 5/5. In terms of biological role, catalyzes the complicated ring closure reaction between the two acyclic compounds 1-deoxy-D-xylulose-5-phosphate (DXP) and 3-amino-2-oxopropyl phosphate (1-amino-acetone-3-phosphate or AAP) to form pyridoxine 5'-phosphate (PNP) and inorganic phosphate. This is Pyridoxine 5'-phosphate synthase from Campylobacter lari (strain RM2100 / D67 / ATCC BAA-1060).